We begin with the raw amino-acid sequence, 382 residues long: 1-deoxy-D-xylulose 5-phosphate reductoisomerase (382 aa).

6 residues coordinate NADPH: Thr-10, Gly-11, Ser-12, Ile-13, Gly-36, and Asn-122. Residue Lys-123 participates in 1-deoxy-D-xylulose 5-phosphate binding. Glu-124 is a binding site for NADPH. Residue Asp-148 participates in Mn(2+) binding. 4 residues coordinate 1-deoxy-D-xylulose 5-phosphate: Ser-149, Glu-150, Ser-174, and His-197. Residue Glu-150 coordinates Mn(2+). Gly-203 serves as a coordination point for NADPH. Ser-210, Asn-215, Lys-216, and Glu-219 together coordinate 1-deoxy-D-xylulose 5-phosphate. Glu-219 contacts Mn(2+).

Belongs to the DXR family. Requires Mg(2+) as cofactor. The cofactor is Mn(2+).

It catalyses the reaction 2-C-methyl-D-erythritol 4-phosphate + NADP(+) = 1-deoxy-D-xylulose 5-phosphate + NADPH + H(+). The protein operates within isoprenoid biosynthesis; isopentenyl diphosphate biosynthesis via DXP pathway; isopentenyl diphosphate from 1-deoxy-D-xylulose 5-phosphate: step 1/6. Functionally, catalyzes the NADPH-dependent rearrangement and reduction of 1-deoxy-D-xylulose-5-phosphate (DXP) to 2-C-methyl-D-erythritol 4-phosphate (MEP). This Pelodictyon phaeoclathratiforme (strain DSM 5477 / BU-1) protein is 1-deoxy-D-xylulose 5-phosphate reductoisomerase.